We begin with the raw amino-acid sequence, 22 residues long: thr operon leader peptide (22 aa).

Belongs to the thr operon leader peptide family.

This protein is involved in control of the biosynthesis of threonine. This Yersinia pestis bv. Antiqua (strain Antiqua) protein is thr operon leader peptide.